We begin with the raw amino-acid sequence, 213 residues long: Putative 3-methyladenine DNA glycosylase (213 aa).

Residues Gly165–Val187 are disordered.

This sequence belongs to the DNA glycosylase MPG family.

In Streptomyces avermitilis (strain ATCC 31267 / DSM 46492 / JCM 5070 / NBRC 14893 / NCIMB 12804 / NRRL 8165 / MA-4680), this protein is Putative 3-methyladenine DNA glycosylase.